A 360-amino-acid polypeptide reads, in one-letter code: MSEAPVYTLKQLAELLQVEVQGNIETPISGVEDISQAQPHHIAFLDNEKYSSFLKNTKAGAIILSRSQAMQHAHLKKNFLITNESPSLTFQKCIELFIEPVTSGFPGIHPTAVIHPTARIEKNVTIEPYVVISQHAHIGSDTYIGAGSVIGAHSVLGANCLIHPKVVIRERVLMGNRVVVQPGAVLGSCGFGYITNAFGHHKPLKHLGYVIVGDDVEIGANTTIDRGRFKNTVIHEGTKIDNQVQVAHHVEIGKHSIIVAQAGIAGSTKIGEHVIIGGQTGITGHISIADHVIMIAQTGVTKSITSPGIYGGAPARPYQETHRLIAKIRNLPKTEERLSKLEKQVRDLSTPSLAEIPSEI.

H248 serves as the catalytic Proton acceptor.

It belongs to the transferase hexapeptide repeat family. LpxD subfamily. As to quaternary structure, homotrimer.

The catalysed reaction is a UDP-3-O-[(3R)-3-hydroxyacyl]-alpha-D-glucosamine + a (3R)-hydroxyacyl-[ACP] = a UDP-2-N,3-O-bis[(3R)-3-hydroxyacyl]-alpha-D-glucosamine + holo-[ACP] + H(+). It participates in bacterial outer membrane biogenesis; LPS lipid A biosynthesis. Catalyzes the N-acylation of UDP-3-O-acylglucosamine using 3-hydroxyacyl-ACP as the acyl donor. Is involved in the biosynthesis of lipid A, a phosphorylated glycolipid that anchors the lipopolysaccharide to the outer membrane of the cell. This Chlamydia pneumoniae (Chlamydophila pneumoniae) protein is UDP-3-O-acylglucosamine N-acyltransferase.